Reading from the N-terminus, the 98-residue chain is NADH-ubiquinone oxidoreductase chain 4L (98 aa).

3 consecutive transmembrane segments (helical) span residues 1 to 21, 29 to 49, and 61 to 81; these read MSLT…GLLL, SLLC…MTIL, and IILL…LVMV.

It belongs to the complex I subunit 4L family. As to quaternary structure, core subunit of respiratory chain NADH dehydrogenase (Complex I) which is composed of 45 different subunits.

The protein localises to the mitochondrion inner membrane. The catalysed reaction is a ubiquinone + NADH + 5 H(+)(in) = a ubiquinol + NAD(+) + 4 H(+)(out). Core subunit of the mitochondrial membrane respiratory chain NADH dehydrogenase (Complex I) which catalyzes electron transfer from NADH through the respiratory chain, using ubiquinone as an electron acceptor. Part of the enzyme membrane arm which is embedded in the lipid bilayer and involved in proton translocation. This is NADH-ubiquinone oxidoreductase chain 4L (MT-ND4L) from Vampyrodes caraccioli (Great stripe-faced bat).